We begin with the raw amino-acid sequence, 411 residues long: LL-diaminopimelate aminotransferase (411 aa).

Residues Tyr15 and Gly42 each contribute to the substrate site. Pyridoxal 5'-phosphate contacts are provided by residues Tyr72, 108 to 109 (SK), Tyr132, Asn187, Tyr218, and 246 to 248 (SFS). Lys109, Tyr132, and Asn187 together coordinate substrate. Position 249 is an N6-(pyridoxal phosphate)lysine (Lys249). Positions 257 and 292 each coordinate pyridoxal 5'-phosphate. Substrate is bound by residues Asn292 and Arg388.

The protein belongs to the class-I pyridoxal-phosphate-dependent aminotransferase family. LL-diaminopimelate aminotransferase subfamily. As to quaternary structure, homodimer. Pyridoxal 5'-phosphate serves as cofactor.

It catalyses the reaction (2S,6S)-2,6-diaminopimelate + 2-oxoglutarate = (S)-2,3,4,5-tetrahydrodipicolinate + L-glutamate + H2O + H(+). The protein operates within amino-acid biosynthesis; L-lysine biosynthesis via DAP pathway; LL-2,6-diaminopimelate from (S)-tetrahydrodipicolinate (aminotransferase route): step 1/1. Its function is as follows. Involved in the synthesis of meso-diaminopimelate (m-DAP or DL-DAP), required for both lysine and peptidoglycan biosynthesis. Catalyzes the direct conversion of tetrahydrodipicolinate to LL-diaminopimelate. The sequence is that of LL-diaminopimelate aminotransferase from Cyanothece sp. (strain PCC 7425 / ATCC 29141).